The primary structure comprises 605 residues: MQKNKIKTFSIIAHIDHGKSTLADRILELTNTVSKRELTNQFLDSMELEKERGISIKLNAVQLKYKDYIFQLIDTPGHVDFTYEVSRSLAASEGALLIVDATQGIQAQTLANVYLAIENKLEIIPVINKVDLPSADVDRVKQEIEDVIGIPTNSAIEVSAKTGFGVDKLLDAIVEYVPSPLDADDLKPLKALIFDSYFDPYRGVVLLIRIKEGKLKVGDKFMFMSRKHDESNTYHVIELGVKNPSETKKEFLESGEVGWVSAAIRDAKEISVGDTITHIDNPAKEALPGYKKIKAVVFTGFYPIDTKDYVQLKESLEKISLSDSSIVWEQETSKALGFGFRVGFLGLLHMEILQERLDREYNVGIIATAPSVEYKIFKTNGEIEFVSNPTMMPDRSTIEKIEEPYIEATVFIPNEYIGNLMELCQSKRGIYISLEALDDKRSKIVYELPLSETILDFFDKMKSYTKGFASFEYELIGYKESDLVKVDILLNGEKVDAFSIIAHKDKAYEHARELCIKLKDEIPRQNFEIPVQATIGGKIIARETIKAYRKDVTAKLYGGDVTRKQKLLKKQKAGKKRMKKIGSIEVPQEAFLNILKTNTDQKNKK.

The 178-residue stretch at 4–181 (NKIKTFSIIA…AIVEYVPSPL (178 aa)) folds into the tr-type G domain. GTP-binding positions include 16–21 (DHGKST) and 128–131 (NKVD).

This sequence belongs to the TRAFAC class translation factor GTPase superfamily. Classic translation factor GTPase family. LepA subfamily.

It is found in the cell membrane. It carries out the reaction GTP + H2O = GDP + phosphate + H(+). In terms of biological role, required for accurate and efficient protein synthesis under certain stress conditions. May act as a fidelity factor of the translation reaction, by catalyzing a one-codon backward translocation of tRNAs on improperly translocated ribosomes. Back-translocation proceeds from a post-translocation (POST) complex to a pre-translocation (PRE) complex, thus giving elongation factor G a second chance to translocate the tRNAs correctly. Binds to ribosomes in a GTP-dependent manner. The sequence is that of Elongation factor 4 from Mycoplasmopsis synoviae (strain 53) (Mycoplasma synoviae).